Here is a 133-residue protein sequence, read N- to C-terminus: Small ribosomal subunit protein eS17 (133 aa).

Belongs to the eukaryotic ribosomal protein eS17 family.

In Spodoptera frugiperda (Fall armyworm), this protein is Small ribosomal subunit protein eS17 (RpS17).